A 293-amino-acid polypeptide reads, in one-letter code: tRNA pseudouridine synthase B (293 aa).

Asp38 serves as the catalytic Nucleophile.

This sequence belongs to the pseudouridine synthase TruB family. Type 1 subfamily.

The enzyme catalyses uridine(55) in tRNA = pseudouridine(55) in tRNA. Responsible for synthesis of pseudouridine from uracil-55 in the psi GC loop of transfer RNAs. The protein is tRNA pseudouridine synthase B of Nostoc sp. (strain PCC 7120 / SAG 25.82 / UTEX 2576).